The chain runs to 1295 residues: DNA-directed RNA polymerase subunit beta' (1295 aa).

Zn(2+) contacts are provided by C60, C62, C75, and C78. Mg(2+) contacts are provided by D516, D518, and D520. Zn(2+) contacts are provided by C841, C914, C921, and C924.

This sequence belongs to the RNA polymerase beta' chain family. In terms of assembly, the RNAP catalytic core consists of 2 alpha, 1 beta, 1 beta' and 1 omega subunit. When a sigma factor is associated with the core the holoenzyme is formed, which can initiate transcription. Mg(2+) serves as cofactor. The cofactor is Zn(2+).

The enzyme catalyses RNA(n) + a ribonucleoside 5'-triphosphate = RNA(n+1) + diphosphate. Functionally, DNA-dependent RNA polymerase catalyzes the transcription of DNA into RNA using the four ribonucleoside triphosphates as substrates. The polypeptide is DNA-directed RNA polymerase subunit beta' (Dehalococcoides mccartyi (strain ATCC BAA-2100 / JCM 16839 / KCTC 5957 / BAV1)).